Consider the following 530-residue polypeptide: PC4 and SFRS1-interacting protein (530 aa).

The PWWP domain occupies 1 to 64 (MTRDFKPGDL…PKDIFPYSEN (64 aa)). Lysine 75 is covalently cross-linked (Glycyl lysine isopeptide (Lys-Gly) (interchain with G-Cter in SUMO2)). Positions 88–349 (PKVKFSSQQA…VEKKRETSMD (262 aa)) are disordered. The segment covering 92 to 104 (FSSQQAATKQSNA) has biased composition (polar residues). A phosphoserine mark is found at serine 102, serine 105, and serine 106. Residues 113–135 (KETSVSKEDTDHEEKASNEDVTK) are compositionally biased toward basic and acidic residues. Phosphothreonine occurs at positions 115 and 122. Position 129 is a phosphoserine (serine 129). The residue at position 141 (threonine 141) is a Phosphothreonine. The span at 144 to 153 (AARRGRKRKA) shows a compositional bias: basic residues. The Nuclear localization signal motif lies at 146–156 (RRGRKRKAEKQ). Threonine 167 is modified (phosphothreonine). 2 positions are modified to phosphoserine: serine 177 and serine 206. A compositionally biased stretch (basic and acidic residues) spans 213 to 261 (EEDKSKKKGQEEKQPKKQPKKDEEGQKEEDKPRKEPDKKEGKKEVESKR). At serine 271 the chain carries Phosphoserine. Phosphothreonine is present on threonine 272. Phosphoserine occurs at positions 273 and 275. Residues 274 to 283 (DSEEEGDDQE) are compositionally biased toward acidic residues. A compositionally biased stretch (basic residues) spans 287–302 (KRKGGRNFQTAHRRNM). Residues 305–349 (GQHEKEAADRKRKQEEQMETEQQNKDEGKKPEVKKVEKKRETSMD) show a composition bias toward basic and acidic residues. Coiled-coil stretches lie at residues 306 to 334 (QHEK…EGKK) and 371 to 395 (NRCI…KHTE). Positions 340–417 (VEKKRETSMD…VSQVIMEKST (78 aa)) are integrase-binding domain (IBD). Serine 434 is modified (phosphoserine). Residue threonine 437 is modified to Phosphothreonine. Serine 443 bears the Phosphoserine mark. The span at 446–473 (EQRQHEEANKTKDQGKKGPNKKLEKEQT) shows a compositional bias: basic and acidic residues. Residues 446-530 (EQRQHEEANK…ISLKDSTLDN (85 aa)) form a disordered region. The segment covering 474-494 (GSKTLNGGSDAQDGNQPQHNG) has biased composition (polar residues). Positions 498 to 530 (EDSKDNHEASTKKKPSSEERETEISLKDSTLDN) are enriched in basic and acidic residues. A Phosphoserine modification is found at serine 514. Arginine 517 bears the Citrulline mark. Serine 522 is modified (phosphoserine). At threonine 527 the chain carries Phosphothreonine.

The protein belongs to the HDGF family. Monomer. Interacts with IFRD1/PC4. Isoform 2 interacts with SFRS1. Isoform 1 interacts (via IBD domain) with POGZ (via IBM motif) and CDCA7L (via IBM motifs). Interacts (via IBD domain) with KMT2A (via IBM motifs) with a moderate affinity whereas interacts with the KMT2A-MEN1 complex with a greater affinity; MEN1 enhances interaction of KMT2A with PSIP1. Interacts with fusion protein KMT2A-MLLT3. Interacts (via IBD domain) with IWS1 (via IBM motif), MED1 (via IBM motif) and DBF4 (via IBM motifs). As to quaternary structure, (Microbial infection) Interacts (via IBD domain) with human HIV-1 integrase protein (HIV-1 IN), determining its nuclear localization, its tight association with chromatin and its protection from the proteasome. In terms of assembly, (Microbial infection) Interacts with HIV-2 IN. Citrullinated by PADI4. In terms of tissue distribution, widely expressed. Expressed at high level in the thymus. Expressed in fetal and adult brain. Expressed in neurons, but not astrocytes. Markedly elevated in fetal as compared to adult brain. In the adult brain, expressed in the subventricular zone (SVZ), in hippocampus, and undetectable elsewhere. In the fetal brain, expressed in the germinal neuroepithelium and cortical plate regions.

The protein localises to the nucleus. In terms of biological role, transcriptional coactivator involved in neuroepithelial stem cell differentiation and neurogenesis. Involved in particular in lens epithelial cell gene regulation and stress responses. May play an important role in lens epithelial to fiber cell terminal differentiation. May play a protective role during stress-induced apoptosis. Isoform 2 is a more general and stronger transcriptional coactivator. Isoform 2 may also act as an adapter to coordinate pre-mRNA splicing. Cellular cofactor for lentiviral integration. This is PC4 and SFRS1-interacting protein (PSIP1) from Homo sapiens (Human).